We begin with the raw amino-acid sequence, 359 residues long: Isopentenyl-diphosphate delta-isomerase (359 aa).

11–12 provides a ligand contact to substrate; the sequence is RK. FMN is bound by residues Ser-68, 69–71, Ser-99, and Asn-127; that span reads GMT. Position 99 to 101 (99 to 101) interacts with substrate; the sequence is SQR. Residue Gln-163 coordinates substrate. Glu-164 provides a ligand contact to Mg(2+). FMN contacts are provided by residues Lys-199, Thr-229, 278–280, and 299–300; these read GIR and AL.

It belongs to the IPP isomerase type 2 family. As to quaternary structure, homooctamer. Dimer of tetramers. FMN is required as a cofactor. The cofactor is NADPH. It depends on Mg(2+) as a cofactor.

It localises to the cytoplasm. The catalysed reaction is isopentenyl diphosphate = dimethylallyl diphosphate. With respect to regulation, inhibited by 3,4-epoxy-3-methylbutyl diphosphate (EIPP). Functionally, involved in the biosynthesis of isoprenoids. Catalyzes the 1,3-allylic rearrangement of the homoallylic substrate isopentenyl (IPP) to its allylic isomer, dimethylallyl diphosphate (DMAPP). The chain is Isopentenyl-diphosphate delta-isomerase from Methanocaldococcus jannaschii (strain ATCC 43067 / DSM 2661 / JAL-1 / JCM 10045 / NBRC 100440) (Methanococcus jannaschii).